The chain runs to 358 residues: Photosystem II protein D1 2 (358 aa).

The next 3 membrane-spanning stretches (helical) occupy residues tyrosine 28–isoleucine 45, histidine 117–leucine 132, and tryptophan 141–alanine 155. Chlorophyll a is bound at residue histidine 117. Tyrosine 125 is a pheophytin a binding site. Aspartate 169 and glutamate 188 together coordinate [CaMn4O5] cluster. The helical transmembrane segment at phenylalanine 196–leucine 217 threads the bilayer. Histidine 197 provides a ligand contact to chlorophyll a. A quinone-binding positions include histidine 214 and serine 263 to phenylalanine 264. Histidine 214 serves as a coordination point for Fe cation. Residue histidine 271 coordinates Fe cation. A helical transmembrane segment spans residues phenylalanine 273–methionine 287. [CaMn4O5] cluster-binding residues include histidine 331, glutamate 332, aspartate 341, and alanine 343. Residues alanine 344–glycine 358 constitute a propeptide that is removed on maturation.

It belongs to the reaction center PufL/M/PsbA/D family. PSII is composed of 1 copy each of membrane proteins PsbA, PsbB, PsbC, PsbD, PsbE, PsbF, PsbH, PsbI, PsbJ, PsbK, PsbL, PsbM, PsbT, PsbX, PsbY, PsbZ, Psb30/Ycf12, peripheral proteins PsbO, CyanoQ (PsbQ), PsbU, PsbV and a large number of cofactors. It forms dimeric complexes. The D1/D2 heterodimer binds P680, chlorophylls that are the primary electron donor of PSII, and subsequent electron acceptors. It shares a non-heme iron and each subunit binds pheophytin, quinone, additional chlorophylls, carotenoids and lipids. D1 provides most of the ligands for the Mn4-Ca-O5 cluster of the oxygen-evolving complex (OEC). There is also a Cl(-1) ion associated with D1 and D2, which is required for oxygen evolution. The PSII complex binds additional chlorophylls, carotenoids and specific lipids. serves as cofactor. Tyr-160 forms a radical intermediate that is referred to as redox-active TyrZ, YZ or Y-Z. Post-translationally, C-terminally processed by CtpA; processing is essential to allow assembly of the oxygen-evolving complex and thus photosynthetic growth.

The protein localises to the cellular thylakoid membrane. It carries out the reaction 2 a plastoquinone + 4 hnu + 2 H2O = 2 a plastoquinol + O2. Photosystem II (PSII) is a light-driven water:plastoquinone oxidoreductase that uses light energy to abstract electrons from H(2)O, generating O(2) and a proton gradient subsequently used for ATP formation. It consists of a core antenna complex that captures photons, and an electron transfer chain that converts photonic excitation into a charge separation. The D1/D2 (PsbA/PsbD) reaction center heterodimer binds P680, the primary electron donor of PSII as well as several subsequent electron acceptors. This is Photosystem II protein D1 2 from Synechococcus sp. (strain CC9605).